The following is a 122-amino-acid chain: MVQRADINNVLSEIRNLRTQMMQNQRIEQDQSVRGRIDGPRQVQETQEVPSFSDMLGKAVNNVHEVQSQASELRTAYEMGDPNVDITRVMIAAQKSSVSFEALTQVRNRVVRAYEDIMNMPI.

Belongs to the FliE family.

Its subcellular location is the bacterial flagellum basal body. This chain is Flagellar hook-basal body complex protein FliE, found in Marinobacter nauticus (strain ATCC 700491 / DSM 11845 / VT8) (Marinobacter aquaeolei).